The chain runs to 184 residues: V-type proton ATPase subunit E (184 aa).

The protein belongs to the V-ATPase E subunit family.

Produces ATP from ADP in the presence of a proton gradient across the membrane. In Finegoldia magna (strain ATCC 29328 / DSM 20472 / WAL 2508) (Peptostreptococcus magnus), this protein is V-type proton ATPase subunit E.